The primary structure comprises 167 residues: Phosphopantetheine adenylyltransferase (167 aa).

Thr9 provides a ligand contact to substrate. Residues 9-10 (TF) and His17 contribute to the ATP site. 3 residues coordinate substrate: Lys41, Leu73, and Arg87. ATP-binding positions include 88–90 (GLR), Glu98, and 123–129 (NSYISST).

The protein belongs to the bacterial CoaD family. As to quaternary structure, homohexamer. It depends on Mg(2+) as a cofactor.

It localises to the cytoplasm. The catalysed reaction is (R)-4'-phosphopantetheine + ATP + H(+) = 3'-dephospho-CoA + diphosphate. It functions in the pathway cofactor biosynthesis; coenzyme A biosynthesis; CoA from (R)-pantothenate: step 4/5. Functionally, reversibly transfers an adenylyl group from ATP to 4'-phosphopantetheine, yielding dephospho-CoA (dPCoA) and pyrophosphate. The polypeptide is Phosphopantetheine adenylyltransferase (Chromohalobacter salexigens (strain ATCC BAA-138 / DSM 3043 / CIP 106854 / NCIMB 13768 / 1H11)).